A 225-amino-acid chain; its full sequence is Protein-L-isoaspartate O-methyltransferase (225 aa).

Serine 75 is a catalytic residue.

This sequence belongs to the methyltransferase superfamily. L-isoaspartyl/D-aspartyl protein methyltransferase family.

The protein localises to the cytoplasm. The catalysed reaction is [protein]-L-isoaspartate + S-adenosyl-L-methionine = [protein]-L-isoaspartate alpha-methyl ester + S-adenosyl-L-homocysteine. Functionally, catalyzes the methyl esterification of L-isoaspartyl residues in peptides and proteins that result from spontaneous decomposition of normal L-aspartyl and L-asparaginyl residues. It plays a role in the repair and/or degradation of damaged proteins. This Xylella fastidiosa (strain 9a5c) protein is Protein-L-isoaspartate O-methyltransferase.